The sequence spans 871 residues: Phosphoinositide 3-kinase regulatory subunit 5 (871 aa).

An N-acetylmethionine modification is found at Met1. The segment at 25 to 101 (SLGRRSAPWS…TPHFPPDSDL (77 aa)) is heterodimerization. The interval 381–413 (MDSGYVEDSEENSEWPQKPGSQKRQGHRRPGQK) is disordered. Phosphoserine is present on residues Ser451 and Ser500. Residues 646–746 (PILADMLLYY…WSNLEKVCTS (101 aa)) are interaction with beta-gamma G protein dimers.

Heterodimer of a catalytic subunit (PIK3CG/p120) and a regulatory (PIK3R5a/p101) subunit. Interacts with beta-gamma G protein dimers.

The protein resides in the nucleus. It is found in the cytoplasm. It localises to the cell membrane. Greatly activated by G gamma proteins. In terms of biological role, regulatory subunit of the PI3K gamma complex. Required for recruitment of the catalytic subunit to the plasma membrane via interaction with beta-gamma G protein dimers. Required for G protein-mediated activation of PIK3CG. The protein is Phosphoinositide 3-kinase regulatory subunit 5 (Pik3r5) of Mus musculus (Mouse).